A 484-amino-acid chain; its full sequence is Cobyric acid synthase (484 aa).

Residues alanine 251 to tyrosine 438 form the GATase cobBQ-type domain. The active-site Nucleophile is the cysteine 333. Residue histidine 430 is part of the active site.

The protein belongs to the CobB/CobQ family. CobQ subfamily.

It participates in cofactor biosynthesis; adenosylcobalamin biosynthesis. Its function is as follows. Catalyzes amidations at positions B, D, E, and G on adenosylcobyrinic A,C-diamide. NH(2) groups are provided by glutamine, and one molecule of ATP is hydrogenolyzed for each amidation. The protein is Cobyric acid synthase of Rhizobium etli (strain ATCC 51251 / DSM 11541 / JCM 21823 / NBRC 15573 / CFN 42).